The following is a 117-amino-acid chain: EVQLQQSGPELVKPGASVKMSCKASGYTFTDYYMKWVKQSHGKSLEWIGDINPNNGGTSYNQKFKGKATLTVDKSSSTAYMQLNSLTSEDSAVYYCARDYDWYFDVWGAGTTVTVSS.

An Ig-like domain is found at 1–116 (EVQLQQSGPE…WGAGTTVTVS (116 aa)). An intrachain disulfide couples Cys-22 to Cys-96. Residue Asn-55 is glycosylated (N-linked (GlcNAc...) (high mannose) asparagine; atypical).

This Mus musculus (Mouse) protein is Ig heavy chain V region MOPC 104E.